The chain runs to 173 residues: MTYFVIFLGVCFMLGTLAVASNPSPYYGVVGLVLASVVGCGWLVNLGVSFVSLVLFMIYLGGMLVVFVYSVSLAADPYPEAWGSWRVMGYGLGFVLVVCMGMGLGGFVDFWKIGVTTVDSGGMSFVRLDFGGVAAFYSYGVGLFLVAGWGLLLVLFVVLELVRGLSRGAIRAV.

The next 5 membrane-spanning stretches (helical) occupy residues 1–21, 27–47, 48–68, 87–107, and 139–159; these read MTYFVIFLGVCFMLGTLAVAS, YGVVGLVLASVVGCGWLVNLG, VSFVSLVLFMIYLGGMLVVFV, VMGYGLGFVLVVCMGMGLGGF, and YGVGLFLVAGWGLLLVLFVVL.

It belongs to the complex I subunit 6 family.

Its subcellular location is the mitochondrion membrane. The enzyme catalyses a ubiquinone + NADH + 5 H(+)(in) = a ubiquinol + NAD(+) + 4 H(+)(out). Core subunit of the mitochondrial membrane respiratory chain NADH dehydrogenase (Complex I) that is believed to belong to the minimal assembly required for catalysis. Complex I functions in the transfer of electrons from NADH to the respiratory chain. The immediate electron acceptor for the enzyme is believed to be ubiquinone. This chain is NADH-ubiquinone oxidoreductase chain 6 (MT-ND6), found in Coturnix japonica (Japanese quail).